Consider the following 112-residue polypeptide: MTEGEVGVGLLDTSVFIARESGGAIADLPERVALSVMTIGELQLGLLNAGDSATRSRRADTLALARTADQIPVSEAVMISLARLVADCRAAGVRRSVKLTDALIAATAEIKV.

The PINc domain maps to 10 to 109 (LLDTSVFIAR…TDALIAATAE (100 aa)). The Mg(2+) site is built by Asp-12 and Asp-101.

This sequence belongs to the PINc/VapC protein family. Requires Mg(2+) as cofactor.

Toxic component of a type II toxin-antitoxin (TA) system. An RNase. The cognate antitoxin is VapB8. This Mycobacterium tuberculosis (strain CDC 1551 / Oshkosh) protein is Ribonuclease VapC8 (vapC8).